The chain runs to 89 residues: Small ribosomal subunit protein uS15 (89 aa).

This sequence belongs to the universal ribosomal protein uS15 family. Part of the 30S ribosomal subunit. Forms a bridge to the 50S subunit in the 70S ribosome, contacting the 23S rRNA.

Its function is as follows. One of the primary rRNA binding proteins, it binds directly to 16S rRNA where it helps nucleate assembly of the platform of the 30S subunit by binding and bridging several RNA helices of the 16S rRNA. Forms an intersubunit bridge (bridge B4) with the 23S rRNA of the 50S subunit in the ribosome. The protein is Small ribosomal subunit protein uS15 of Ruegeria sp. (strain TM1040) (Silicibacter sp.).